A 724-amino-acid chain; its full sequence is Probable serine/threonine-protein kinase KKQ8 (724 aa).

Disordered stretches follow at residues 1–81 (MVMQ…RQRS) and 93–188 (HPFR…KDIL). Serine 19 is subject to Phosphoserine. The segment covering 45-54 (PYRSSSTSPK) has biased composition (low complexity). The span at 95–106 (FRQTGSGASNSP) shows a compositional bias: polar residues. Residues 143–162 (RSSSVSSCDSSNGTTSSSDS) show a composition bias toward low complexity. Phosphoserine is present on residues serine 232, serine 238, and serine 241. Polar residues-rich tracts occupy residues 318-329 (NASSLLPNVEKS) and 338-351 (GQSP…SPTQ). The interval 318-355 (NASSLLPNVEKSQTNHEKRTGQSPNDSNRSSPTQGRED) is disordered. The Protein kinase domain occupies 412–712 (GHPVGLVGAG…VGKLLDMQWM (301 aa)). Residues 418 to 426 (VGAGAYGEV) and lysine 455 each bind ATP. Aspartate 563 acts as the Proton acceptor in catalysis.

Belongs to the protein kinase superfamily. CAMK Ser/Thr protein kinase family. NPR/HAL subfamily. HAL5 sub-subfamily.

The protein resides in the cytoplasm. It catalyses the reaction L-seryl-[protein] + ATP = O-phospho-L-seryl-[protein] + ADP + H(+). The enzyme catalyses L-threonyl-[protein] + ATP = O-phospho-L-threonyl-[protein] + ADP + H(+). This is Probable serine/threonine-protein kinase KKQ8 (KKQ8) from Saccharomyces cerevisiae (strain YJM789) (Baker's yeast).